Here is a 367-residue protein sequence, read N- to C-terminus: MTSTPRTLMVMAGGTGGHVFPGLAVAHRMQAQGWRVVWLGNPAGMEATLVPKHGIPMEYVRFGGLRGKGLATKLALPFNLLRACAQSLRALRRVKPDVVLGMGGYITFPAGLVTVLTGRPLVLHEQNSIAGLTNKVLAKLAKRVLVAFPGALPNAEWTGNPIRAELARTEPPQARYAARSGKLKLLVVGGSLGAAALNEVVPRALALLAPSERPQVVHQAGAKHIDVLKENYEAAGLACGSDVELVPFIDDMASAYASADLVICRSGAMTVAEIAAVGVAALFVPFPHAVDDHQTTNAEFLAEQGAAVLVQQRDLSAELLADWLRGQSRESLAAMAERSRSLAKPDATDEVARVCAAVAGANLEGKQ.

Residues 15 to 17 (TGG), asparagine 127, arginine 163, serine 191, isoleucine 249, and glutamine 294 contribute to the UDP-N-acetyl-alpha-D-glucosamine site.

It belongs to the glycosyltransferase 28 family. MurG subfamily.

The protein resides in the cell inner membrane. It catalyses the reaction di-trans,octa-cis-undecaprenyl diphospho-N-acetyl-alpha-D-muramoyl-L-alanyl-D-glutamyl-meso-2,6-diaminopimeloyl-D-alanyl-D-alanine + UDP-N-acetyl-alpha-D-glucosamine = di-trans,octa-cis-undecaprenyl diphospho-[N-acetyl-alpha-D-glucosaminyl-(1-&gt;4)]-N-acetyl-alpha-D-muramoyl-L-alanyl-D-glutamyl-meso-2,6-diaminopimeloyl-D-alanyl-D-alanine + UDP + H(+). It functions in the pathway cell wall biogenesis; peptidoglycan biosynthesis. In terms of biological role, cell wall formation. Catalyzes the transfer of a GlcNAc subunit on undecaprenyl-pyrophosphoryl-MurNAc-pentapeptide (lipid intermediate I) to form undecaprenyl-pyrophosphoryl-MurNAc-(pentapeptide)GlcNAc (lipid intermediate II). This Burkholderia thailandensis (strain ATCC 700388 / DSM 13276 / CCUG 48851 / CIP 106301 / E264) protein is UDP-N-acetylglucosamine--N-acetylmuramyl-(pentapeptide) pyrophosphoryl-undecaprenol N-acetylglucosamine transferase.